The chain runs to 292 residues: Glycine--tRNA ligase alpha subunit (292 aa).

The protein belongs to the class-II aminoacyl-tRNA synthetase family. As to quaternary structure, tetramer of two alpha and two beta subunits.

The protein resides in the cytoplasm. The enzyme catalyses tRNA(Gly) + glycine + ATP = glycyl-tRNA(Gly) + AMP + diphosphate. In Pelotomaculum thermopropionicum (strain DSM 13744 / JCM 10971 / SI), this protein is Glycine--tRNA ligase alpha subunit.